Here is an 86-residue protein sequence, read N- to C-terminus: Toxin 3FTx-Dis4 (86 aa).

A signal peptide spans 1 to 19; the sequence is MKTLLLSLVMVGFMYLVSG. 3 disulfides stabilise this stretch: C24/C45, C38/C63, and C79/C84.

The protein belongs to the three-finger toxin family. Ancestral subfamily. In terms of tissue distribution, expressed by the venom gland.

It localises to the secreted. This Dispholidus typus (Boomslang) protein is Toxin 3FTx-Dis4.